Here is a 314-residue protein sequence, read N- to C-terminus: 4-hydroxy-3-methylbut-2-enyl diphosphate reductase (314 aa).

Position 18 (cysteine 18) interacts with [4Fe-4S] cluster. Residues histidine 47 and histidine 80 each coordinate (2E)-4-hydroxy-3-methylbut-2-enyl diphosphate. Histidine 47 and histidine 80 together coordinate dimethylallyl diphosphate. Isopentenyl diphosphate contacts are provided by histidine 47 and histidine 80. Cysteine 102 contacts [4Fe-4S] cluster. Residue histidine 130 participates in (2E)-4-hydroxy-3-methylbut-2-enyl diphosphate binding. A dimethylallyl diphosphate-binding site is contributed by histidine 130. Histidine 130 provides a ligand contact to isopentenyl diphosphate. Glutamate 132 acts as the Proton donor in catalysis. Threonine 171 provides a ligand contact to (2E)-4-hydroxy-3-methylbut-2-enyl diphosphate. [4Fe-4S] cluster is bound at residue cysteine 201. (2E)-4-hydroxy-3-methylbut-2-enyl diphosphate is bound by residues serine 229, serine 230, asparagine 231, and serine 273. Residues serine 229, serine 230, asparagine 231, and serine 273 each coordinate dimethylallyl diphosphate. Isopentenyl diphosphate is bound by residues serine 229, serine 230, asparagine 231, and serine 273.

This sequence belongs to the IspH family. The cofactor is [4Fe-4S] cluster.

The catalysed reaction is isopentenyl diphosphate + 2 oxidized [2Fe-2S]-[ferredoxin] + H2O = (2E)-4-hydroxy-3-methylbut-2-enyl diphosphate + 2 reduced [2Fe-2S]-[ferredoxin] + 2 H(+). The enzyme catalyses dimethylallyl diphosphate + 2 oxidized [2Fe-2S]-[ferredoxin] + H2O = (2E)-4-hydroxy-3-methylbut-2-enyl diphosphate + 2 reduced [2Fe-2S]-[ferredoxin] + 2 H(+). It participates in isoprenoid biosynthesis; dimethylallyl diphosphate biosynthesis; dimethylallyl diphosphate from (2E)-4-hydroxy-3-methylbutenyl diphosphate: step 1/1. It functions in the pathway isoprenoid biosynthesis; isopentenyl diphosphate biosynthesis via DXP pathway; isopentenyl diphosphate from 1-deoxy-D-xylulose 5-phosphate: step 6/6. Catalyzes the conversion of 1-hydroxy-2-methyl-2-(E)-butenyl 4-diphosphate (HMBPP) into a mixture of isopentenyl diphosphate (IPP) and dimethylallyl diphosphate (DMAPP). Acts in the terminal step of the DOXP/MEP pathway for isoprenoid precursor biosynthesis. The sequence is that of 4-hydroxy-3-methylbut-2-enyl diphosphate reductase from Phenylobacterium zucineum (strain HLK1).